A 211-amino-acid polypeptide reads, in one-letter code: DNA/RNA-binding protein ALBA2 (211 aa).

The span at 84–99 (NSGLKKNAKNEDKKSG) shows a compositional bias: basic and acidic residues. The segment at 84-121 (NSGLKKNAKNEDKKSGDEEEEEEEEEEDEENNKNKEAN) is disordered. Residues 100-113 (DEEEEEEEEEEDEE) are compositionally biased toward acidic residues.

It belongs to the histone-like Alba family. In terms of assembly, identified in a TARE6-associated complex consisting of over 30 proteins and including ALBA1, ALBA2 and ALBA4; the complex binds to the non-coding subtelomeric repeat region TARE6.

It localises to the nucleus. The protein resides in the chromosome. Its subcellular location is the telomere. It is found in the cytoplasm. In terms of biological role, possesses DNA- and RNA-binding activities. Binds to DNA with relaxed sequence specificity. Associates with the subtelomeric TARE6 repeats. In Plasmodium falciparum (isolate 3D7), this protein is DNA/RNA-binding protein ALBA2.